We begin with the raw amino-acid sequence, 206 residues long: Putative precorrin-2 dehydrogenase (206 aa).

Residues 20–21 (SV) and 41–46 (KEFDEE) contribute to the NAD(+) site.

Belongs to the precorrin-2 dehydrogenase / sirohydrochlorin ferrochelatase family. As to quaternary structure, homodimer.

The enzyme catalyses precorrin-2 + NAD(+) = sirohydrochlorin + NADH + 2 H(+). Its pathway is porphyrin-containing compound metabolism; siroheme biosynthesis; sirohydrochlorin from precorrin-2: step 1/1. In terms of biological role, involved in the archaeal biosynthesis of heme. Catalyzes the oxiation of precorrin-2 into sirohydroclorin. This chain is Putative precorrin-2 dehydrogenase, found in Methanocaldococcus jannaschii (strain ATCC 43067 / DSM 2661 / JAL-1 / JCM 10045 / NBRC 100440) (Methanococcus jannaschii).